Reading from the N-terminus, the 453-residue chain is V-type proton ATPase subunit B (453 aa).

Arg-341 provides a ligand contact to ATP.

It belongs to the ATPase alpha/beta chains family. V-ATPase is a heteromultimeric enzyme made up of two complexes: the ATP-hydrolytic V1 complex and the proton translocation V0 complex. The V1 complex consists of three catalytic AB heterodimers that form a heterohexamer, three peripheral stalks each consisting of EG heterodimers, one central rotor including subunits D and F, and the regulatory subunits C and H. The proton translocation complex V0 consists of the proton transport subunit a, a ring of proteolipid subunits c9c'', rotary subunit d, subunits e and f, and two accessory subunits.

In terms of biological role, non-catalytic subunit of the V1 complex of vacuolar(H+)-ATPase (V-ATPase), a multisubunit enzyme composed of a peripheral complex (V1) that hydrolyzes ATP and a membrane integral complex (V0) that translocates protons. V-ATPase is responsible for acidifying and maintaining the pH of intracellular compartments and in some cell types, is targeted to the plasma membrane, where it is responsible for acidifying the extracellular environment. Essential for the proper assembly and activity of V-ATPase. The chain is V-type proton ATPase subunit B (ATP6V1B) from Gallus gallus (Chicken).